Here is a 260-residue protein sequence, read N- to C-terminus: Triosephosphate isomerase (260 aa).

11 to 13 (NWK) serves as a coordination point for substrate. The active-site Electrophile is histidine 103. The active-site Proton acceptor is the glutamate 175. Residues glycine 181, serine 220, and 241–242 (GG) each bind substrate.

The protein belongs to the triosephosphate isomerase family. Homodimer.

It is found in the cytoplasm. The catalysed reaction is D-glyceraldehyde 3-phosphate = dihydroxyacetone phosphate. It participates in carbohydrate biosynthesis; gluconeogenesis. It functions in the pathway carbohydrate degradation; glycolysis; D-glyceraldehyde 3-phosphate from glycerone phosphate: step 1/1. Functionally, involved in the gluconeogenesis. Catalyzes stereospecifically the conversion of dihydroxyacetone phosphate (DHAP) to D-glyceraldehyde-3-phosphate (G3P). This chain is Triosephosphate isomerase, found in Shewanella sediminis (strain HAW-EB3).